We begin with the raw amino-acid sequence, 379 residues long: 8-amino-7-oxononanoate synthase (379 aa).

Residues Arg27 and Arg34 each coordinate substrate. 114–115 (GY) is a binding site for pyridoxal 5'-phosphate. His139 lines the substrate pocket. Pyridoxal 5'-phosphate is bound by residues Ser187, 212–215 (DDAH), and 232–235 (TLSK). N6-(pyridoxal phosphate)lysine is present on Lys235. Thr344 provides a ligand contact to substrate.

It belongs to the class-II pyridoxal-phosphate-dependent aminotransferase family. BioF subfamily. In terms of assembly, homodimer. Pyridoxal 5'-phosphate serves as cofactor.

It catalyses the reaction 6-carboxyhexanoyl-[ACP] + L-alanine + H(+) = (8S)-8-amino-7-oxononanoate + holo-[ACP] + CO2. It functions in the pathway cofactor biosynthesis; biotin biosynthesis. In terms of biological role, catalyzes the decarboxylative condensation of pimeloyl-[acyl-carrier protein] and L-alanine to produce 8-amino-7-oxononanoate (AON), [acyl-carrier protein], and carbon dioxide. The polypeptide is 8-amino-7-oxononanoate synthase (Methylobacterium sp. (strain 4-46)).